The sequence spans 431 residues: Glucose-1-phosphate adenylyltransferase (431 aa).

Residue lysine 39 participates in beta-D-fructose 1,6-bisphosphate binding. AMP is bound by residues arginine 40, histidine 46, and arginine 52. An alpha-D-glucose 1-phosphate-binding site is contributed by tyrosine 114. Residue arginine 130 coordinates AMP. Alpha-D-glucose 1-phosphate contacts are provided by residues glycine 179, 194–195 (EK), and serine 212. Residue arginine 386 participates in AMP binding. Beta-D-fructose 1,6-bisphosphate is bound at residue 429 to 431 (QER).

This sequence belongs to the bacterial/plant glucose-1-phosphate adenylyltransferase family. In terms of assembly, homotetramer.

The catalysed reaction is alpha-D-glucose 1-phosphate + ATP + H(+) = ADP-alpha-D-glucose + diphosphate. It participates in glycan biosynthesis; glycogen biosynthesis. With respect to regulation, allosterically activated by fructose-1,6-bisphosphate (F16BP) and inhibited by AMP. In terms of biological role, involved in the biosynthesis of ADP-glucose, a building block required for the elongation reactions to produce glycogen. Catalyzes the reaction between ATP and alpha-D-glucose 1-phosphate (G1P) to produce pyrophosphate and ADP-Glc. The polypeptide is Glucose-1-phosphate adenylyltransferase (Klebsiella pneumoniae (strain 342)).